We begin with the raw amino-acid sequence, 382 residues long: Alanine racemase (382 aa).

The Proton acceptor; specific for D-alanine role is filled by Lys37. Lys37 bears the N6-(pyridoxal phosphate)lysine mark. Residue Arg135 participates in substrate binding. Catalysis depends on Tyr267, which acts as the Proton acceptor; specific for L-alanine. Residue Met315 participates in substrate binding.

It belongs to the alanine racemase family. It depends on pyridoxal 5'-phosphate as a cofactor.

It carries out the reaction L-alanine = D-alanine. Its pathway is amino-acid biosynthesis; D-alanine biosynthesis; D-alanine from L-alanine: step 1/1. In terms of biological role, catalyzes the interconversion of L-alanine and D-alanine. May also act on other amino acids. In Geobacter sulfurreducens (strain ATCC 51573 / DSM 12127 / PCA), this protein is Alanine racemase (alr).